A 193-amino-acid polypeptide reads, in one-letter code: Cilia- and flagella-associated protein 20 (193 aa).

Belongs to the CFAP20 family. In terms of assembly, microtubule inner protein component of sperm flagellar doublet microtubules.

It is found in the nucleus. It localises to the cytoplasm. Its subcellular location is the cytoskeleton. The protein localises to the microtubule organizing center. The protein resides in the centrosome. It is found in the centriole. It localises to the cilium basal body. Its subcellular location is the cilium axoneme. The protein localises to the flagellum axoneme. Its function is as follows. Cilium- and flagellum-specific protein that plays a role in axonemal structure organization and motility. Microtubule inner protein (MIP) part of the dynein-decorated doublet microtubules (DMTs) in cilia axoneme, which is required for motile cilia beating. Involved in the regulation of the size and morphology of cilia. Required for axonemal microtubules polyglutamylation. In Homo sapiens (Human), this protein is Cilia- and flagella-associated protein 20.